A 171-amino-acid polypeptide reads, in one-letter code: Peptide deformylase (171 aa).

2 residues coordinate Fe cation: C87 and H129. Residue E130 is part of the active site. Residue H133 participates in Fe cation binding.

It belongs to the polypeptide deformylase family. The cofactor is Fe(2+).

The enzyme catalyses N-terminal N-formyl-L-methionyl-[peptide] + H2O = N-terminal L-methionyl-[peptide] + formate. In terms of biological role, removes the formyl group from the N-terminal Met of newly synthesized proteins. Requires at least a dipeptide for an efficient rate of reaction. N-terminal L-methionine is a prerequisite for activity but the enzyme has broad specificity at other positions. The sequence is that of Peptide deformylase from Pseudothermotoga lettingae (strain ATCC BAA-301 / DSM 14385 / NBRC 107922 / TMO) (Thermotoga lettingae).